The sequence spans 453 residues: Allantoinase (453 aa).

Zn(2+)-binding residues include His59, His61, Lys146, His186, His242, and Asp315. Residue Lys146 is modified to N6-carboxylysine.

This sequence belongs to the metallo-dependent hydrolases superfamily. Allantoinase family. In terms of assembly, homotetramer. Zn(2+) serves as cofactor. In terms of processing, carboxylation allows a single lysine to coordinate two zinc ions.

The enzyme catalyses (S)-allantoin + H2O = allantoate + H(+). Its pathway is nitrogen metabolism; (S)-allantoin degradation; allantoate from (S)-allantoin: step 1/1. In terms of biological role, catalyzes the conversion of allantoin (5-ureidohydantoin) to allantoic acid by hydrolytic cleavage of the five-member hydantoin ring. This chain is Allantoinase, found in Escherichia coli O127:H6 (strain E2348/69 / EPEC).